A 460-amino-acid polypeptide reads, in one-letter code: ATP synthase subunit beta (460 aa).

150-157 (GGAGVGKT) contributes to the ATP binding site.

The protein belongs to the ATPase alpha/beta chains family. In terms of assembly, F-type ATPases have 2 components, CF(1) - the catalytic core - and CF(0) - the membrane proton channel. CF(1) has five subunits: alpha(3), beta(3), gamma(1), delta(1), epsilon(1). CF(0) has three main subunits: a(1), b(2) and c(9-12). The alpha and beta chains form an alternating ring which encloses part of the gamma chain. CF(1) is attached to CF(0) by a central stalk formed by the gamma and epsilon chains, while a peripheral stalk is formed by the delta and b chains.

It is found in the cell inner membrane. It carries out the reaction ATP + H2O + 4 H(+)(in) = ADP + phosphate + 5 H(+)(out). Produces ATP from ADP in the presence of a proton gradient across the membrane. The catalytic sites are hosted primarily by the beta subunits. The chain is ATP synthase subunit beta from Pectobacterium atrosepticum (strain SCRI 1043 / ATCC BAA-672) (Erwinia carotovora subsp. atroseptica).